Here is a 327-residue protein sequence, read N- to C-terminus: Zinc transport protein ZntB (327 aa).

The Cytoplasmic segment spans residues 1-273 (MEAIKGADVN…ARRTYTMSLM (273 aa)). Residues 274–294 (AMVFLPSTFLTGLFGVNLGGI) traverse the membrane as a helical segment. Residues 295–300 (PGGGWR) lie on the Periplasmic side of the membrane. Residues 301-321 (FGFSLFCILLVVLIGGVALWL) form a helical membrane-spanning segment. Topologically, residues 322–327 (HRSKWL) are cytoplasmic.

Belongs to the CorA metal ion transporter (MIT) (TC 1.A.35) family.

The protein resides in the cell inner membrane. It carries out the reaction Zn(2+)(out) + H(+)(out) = Zn(2+)(in) + H(+)(in). In terms of biological role, zinc transporter. Acts as a Zn(2+):proton symporter, which likely mediates zinc ion uptake. The sequence is that of Zinc transport protein ZntB from Escherichia fergusonii (strain ATCC 35469 / DSM 13698 / CCUG 18766 / IAM 14443 / JCM 21226 / LMG 7866 / NBRC 102419 / NCTC 12128 / CDC 0568-73).